The primary structure comprises 211 residues: tRNA (guanine-N(7)-)-methyltransferase (211 aa).

The S-adenosyl-L-methionine site is built by E43, D68, N95, and N117. Residues K121, D153, and 190-193 (TEYE) contribute to the substrate site.

This sequence belongs to the class I-like SAM-binding methyltransferase superfamily. TrmB family.

The catalysed reaction is guanosine(46) in tRNA + S-adenosyl-L-methionine = N(7)-methylguanosine(46) in tRNA + S-adenosyl-L-homocysteine. It participates in tRNA modification; N(7)-methylguanine-tRNA biosynthesis. Functionally, catalyzes the formation of N(7)-methylguanine at position 46 (m7G46) in tRNA. In Clostridium kluyveri (strain ATCC 8527 / DSM 555 / NBRC 12016 / NCIMB 10680 / K1), this protein is tRNA (guanine-N(7)-)-methyltransferase.